Consider the following 1033-residue polypeptide: PDZ domain-containing protein 7 (1033 aa).

PDZ domains follow at residues 86 to 168 (SVRV…RMGR) and 210 to 293 (IVHL…ETGR). Over residues 323–344 (ESSSSVSSCASSAPYSSGSLPS) the composition is skewed to low complexity. Disordered regions lie at residues 323–380 (ESSS…GGRV), 444–464 (KQQR…LQRS), 754–864 (EPLS…KTVT), and 943–1033 (MELV…PRIP). The segment covering 770–784 (AQSRSRSRSRSRSRS) has biased composition (basic residues). Positions 785–797 (SRGQGKSPGRRSP) are enriched in low complexity. The 73-residue stretch at 862–934 (TVTLSKMKQS…QRAVDTIRRA (73 aa)) folds into the PDZ 3 domain. Pro residues predominate over residues 991-1000 (PEPPTNPQTP).

Homodimerizes (via PDZ2 domain). Component of USH2 complex, composed of ADGRV1, PDZD7, USH2A and WHRN. Interacts (via PDZ domains) with WHRN; the interaction is direct. Interacts with USH1G. Interacts with ADGRV1 (via the cytoplasmic region). Interacts with USH2A (via the cytoplasmic region). Interacts with MYO7A (via MyTH4-FERM domains). In terms of tissue distribution, weakly expressed in the inner ear. Expressed in the retinal pigment epithelium.

The protein localises to the cell projection. Its subcellular location is the cilium. The protein resides in the nucleus. It localises to the stereocilium. In cochlear developing hair cells, essential in organizing the USH2 complex at stereocilia ankle links. Blocks inhibition of adenylate cyclase activity mediated by ADGRV1. The protein is PDZ domain-containing protein 7 of Homo sapiens (Human).